A 604-amino-acid polypeptide reads, in one-letter code: Elongation factor 4 (604 aa).

Positions 8-190 (DKIRNFSIIA…AIVNRLPPPR (183 aa)) constitute a tr-type G domain. Residues 20-25 (DHGKST) and 137-140 (NKID) contribute to the GTP site.

The protein belongs to the TRAFAC class translation factor GTPase superfamily. Classic translation factor GTPase family. LepA subfamily.

Its subcellular location is the cell inner membrane. The enzyme catalyses GTP + H2O = GDP + phosphate + H(+). Its function is as follows. Required for accurate and efficient protein synthesis under certain stress conditions. May act as a fidelity factor of the translation reaction, by catalyzing a one-codon backward translocation of tRNAs on improperly translocated ribosomes. Back-translocation proceeds from a post-translocation (POST) complex to a pre-translocation (PRE) complex, thus giving elongation factor G a second chance to translocate the tRNAs correctly. Binds to ribosomes in a GTP-dependent manner. In Hyphomonas neptunium (strain ATCC 15444), this protein is Elongation factor 4.